Consider the following 123-residue polypeptide: Small ribosomal subunit protein uS13 (123 aa).

The interval 92–123 (RKGLPVRGQKTKTNARTRKGPKKLVGAKKKSK) is disordered.

This sequence belongs to the universal ribosomal protein uS13 family. In terms of assembly, part of the 30S ribosomal subunit. Forms a loose heterodimer with protein S19. Forms two bridges to the 50S subunit in the 70S ribosome.

Located at the top of the head of the 30S subunit, it contacts several helices of the 16S rRNA. In the 70S ribosome it contacts the 23S rRNA (bridge B1a) and protein L5 of the 50S subunit (bridge B1b), connecting the 2 subunits; these bridges are implicated in subunit movement. Contacts the tRNAs in the A and P-sites. The chain is Small ribosomal subunit protein uS13 from Clostridium kluyveri (strain NBRC 12016).